A 337-amino-acid chain; its full sequence is Glycerol-3-phosphate dehydrogenase [NAD(P)+] (337 aa).

Residues W12 and K107 each coordinate NADPH. Positions 107, 138, and 140 each coordinate sn-glycerol 3-phosphate. Residue A142 participates in NADPH binding. The sn-glycerol 3-phosphate site is built by K193, D246, S256, R257, and N258. The active-site Proton acceptor is the K193. R257 is a binding site for NADPH. NADPH-binding residues include V282 and E284.

This sequence belongs to the NAD-dependent glycerol-3-phosphate dehydrogenase family.

It localises to the cytoplasm. It catalyses the reaction sn-glycerol 3-phosphate + NAD(+) = dihydroxyacetone phosphate + NADH + H(+). It carries out the reaction sn-glycerol 3-phosphate + NADP(+) = dihydroxyacetone phosphate + NADPH + H(+). It functions in the pathway membrane lipid metabolism; glycerophospholipid metabolism. Functionally, catalyzes the reduction of the glycolytic intermediate dihydroxyacetone phosphate (DHAP) to sn-glycerol 3-phosphate (G3P), the key precursor for phospholipid synthesis. The protein is Glycerol-3-phosphate dehydrogenase [NAD(P)+] of Koribacter versatilis (strain Ellin345).